We begin with the raw amino-acid sequence, 122 residues long: Small ribosomal subunit protein uS13 (122 aa).

The tract at residues 93-122 is disordered; sequence RLSLPVRGQRTKTNSRTRKGKRKTVAGKKK. Residues 101-122 are compositionally biased toward basic residues; it reads QRTKTNSRTRKGKRKTVAGKKK.

Belongs to the universal ribosomal protein uS13 family. As to quaternary structure, part of the 30S ribosomal subunit. Forms a loose heterodimer with protein S19. Forms two bridges to the 50S subunit in the 70S ribosome.

Its function is as follows. Located at the top of the head of the 30S subunit, it contacts several helices of the 16S rRNA. In the 70S ribosome it contacts the 23S rRNA (bridge B1a) and protein L5 of the 50S subunit (bridge B1b), connecting the 2 subunits; these bridges are implicated in subunit movement. Contacts the tRNAs in the A and P-sites. The chain is Small ribosomal subunit protein uS13 from Chlamydia caviae (strain ATCC VR-813 / DSM 19441 / 03DC25 / GPIC) (Chlamydophila caviae).